The chain runs to 225 residues: Cobalt transport protein CbiM (225 aa).

The next 6 membrane-spanning stretches (helical) occupy residues Val-7 to Ala-27, Pro-43 to Pro-63, Leu-76 to Ile-96, Thr-108 to Phe-128, Phe-143 to Leu-163, and Phe-175 to Val-195.

This sequence belongs to the CbiM family. In terms of assembly, forms an energy-coupling factor (ECF) transporter complex composed of an ATP-binding protein (A component, CbiO), a transmembrane protein (T component, CbiQ) and 2 possible substrate-capture proteins (S components, CbiM and CbiN) of unknown stoichimetry.

The protein localises to the cell inner membrane. It functions in the pathway cofactor biosynthesis; adenosylcobalamin biosynthesis. Part of the energy-coupling factor (ECF) transporter complex CbiMNOQ involved in cobalt import. In Sorangium cellulosum (strain So ce56) (Polyangium cellulosum (strain So ce56)), this protein is Cobalt transport protein CbiM.